The chain runs to 47 residues: Delta-stichotoxin-Hcr3a (47 aa).

Pro-3 is modified (hydroxyproline). Cystine bridges form between Cys-4/Cys-44, Cys-6/Cys-34, and Cys-27/Cys-45.

This sequence belongs to the sea anemone sodium channel inhibitory toxin family. Type I subfamily.

The protein resides in the secreted. It is found in the nematocyst. Its function is as follows. Inhibits voltage-gated sodium channels (Nav). This Radianthus crispa (Leathery sea anemone) protein is Delta-stichotoxin-Hcr3a.